A 505-amino-acid chain; its full sequence is ATP synthase subunit alpha (505 aa).

171–178 (GDRQTGKT) is an ATP binding site.

The protein belongs to the ATPase alpha/beta chains family. In terms of assembly, F-type ATPases have 2 components, CF(1) - the catalytic core - and CF(0) - the membrane proton channel. CF(1) has five subunits: alpha(3), beta(3), gamma(1), delta(1), epsilon(1). CF(0) has three main subunits: a(1), b(2) and c(9-12). The alpha and beta chains form an alternating ring which encloses part of the gamma chain. CF(1) is attached to CF(0) by a central stalk formed by the gamma and epsilon chains, while a peripheral stalk is formed by the delta and b chains.

The protein localises to the cell inner membrane. It catalyses the reaction ATP + H2O + 4 H(+)(in) = ADP + phosphate + 5 H(+)(out). Functionally, produces ATP from ADP in the presence of a proton gradient across the membrane. The alpha chain is a regulatory subunit. The protein is ATP synthase subunit alpha of Campylobacter concisus (strain 13826).